We begin with the raw amino-acid sequence, 227 residues long: LexA repressor (227 aa).

The H-T-H motif DNA-binding region spans 25–45 (FDEMKDALDLRSKSGIHRLIT). Active-site for autocatalytic cleavage activity residues include S148 and K186.

This sequence belongs to the peptidase S24 family. Homodimer.

The catalysed reaction is Hydrolysis of Ala-|-Gly bond in repressor LexA.. In terms of biological role, represses a number of genes involved in the response to DNA damage (SOS response), including recA and lexA. In the presence of single-stranded DNA, RecA interacts with LexA causing an autocatalytic cleavage which disrupts the DNA-binding part of LexA, leading to derepression of the SOS regulon and eventually DNA repair. The protein is LexA repressor of Cereibacter sphaeroides (strain ATCC 17029 / ATH 2.4.9) (Rhodobacter sphaeroides).